Consider the following 976-residue polypeptide: Vacuolar membrane protease (976 aa).

The Cytoplasmic portion of the chain corresponds to 1-15; the sequence is MKLKSVFRSVLKYRK. The helical transmembrane segment at 16 to 36 threads the bilayer; that stretch reads TNLSLLLLITYSIITLLYIFD. At 37-359 the chain is on the vacuolar side; that stretch reads HERYKLNLPK…KFFVISAKTL (323 aa). N-linked (GlcNAc...) asparagine glycosylation is found at N96 and N121. 2 residues coordinate Zn(2+): H156 and D168. N-linked (GlcNAc...) asparagine glycosylation is present at N189. E200 acts as the Proton acceptor in catalysis. Residue E201 participates in Zn(2+) binding. Residues N212 and N217 are each glycosylated (N-linked (GlcNAc...) asparagine). Zn(2+) contacts are provided by E226 and H300. The helical transmembrane segment at 360–380 threads the bilayer; that stretch reads FYWNCIFLLVSPVVAIGLYLI. Residues 381–392 are Cytoplasmic-facing; it reads SRDRMTWKSHSW. The chain crosses the membrane as a helical span at residues 393–412; that stretch reads LSWTRFPLSLAAGIIVQKLF. The Vacuolar portion of the chain corresponds to 413 to 428; the sequence is SNDIIRSNPLTFSRNY. Residues 429-449 traverse the membrane as a helical segment; the sequence is FWPISAFFTQVIFTSYVLINC. Over 450–461 the chain is Cytoplasmic; sequence SNFFFPCADMKS. The chain crosses the membrane as a helical span at residues 462–482; the sequence is LSIIELFIILWTILLFTSKLL. Topologically, residues 483–496 are vacuolar; that stretch reads YSSDYRYTGLYPLS. The helical transmembrane segment at 497-517 threads the bilayer; that stretch reads IFFLLSTIAAILRLLALALGM. Over 518-627 the chain is Cytoplasmic; it reads RTRKRLGREC…NSLKLEYTDY (110 aa). Positions 528–610 are disordered; sequence RDHHSNYSSH…PLLKGSNSME (83 aa). Over residues 549-558 the composition is skewed to polar residues; sequence NLEQPQDQFT. Positions 559-570 are enriched in low complexity; the sequence is SSQDDQASIQDD. Residues 582–601 are compositionally biased toward basic and acidic residues; that stretch reads NVDEDHGMDSSSQQHDERVP. Residues 628–648 traverse the membrane as a helical segment; that stretch reads AWIIQFLLIVPIPSFILFNSV. Residues 649 to 668 are Vacuolar-facing; the sequence is DVIMDALNHTVQEGSKATFD. N656 carries N-linked (GlcNAc...) asparagine glycosylation. A helical membrane pass occupies residues 669 to 689; that stretch reads VLRFGMVGSILMALPILPFFY. Residues 690-692 lie on the Cytoplasmic side of the membrane; the sequence is KVN. A helical membrane pass occupies residues 693-713; the sequence is YITISLTALLFLISASKTLLV. At 714-976 the chain is on the vacuolar side; it reads HPFTNSNPLK…LVIVKDAIIL (263 aa). 5 N-linked (GlcNAc...) asparagine glycosylation sites follow: N768, N796, N811, N866, and N937.

The protein belongs to the peptidase M28 family. It depends on Zn(2+) as a cofactor.

The protein resides in the vacuole membrane. Its function is as follows. May be involved in vacuolar sorting and osmoregulation. The polypeptide is Vacuolar membrane protease (Saccharomyces cerevisiae (strain RM11-1a) (Baker's yeast)).